We begin with the raw amino-acid sequence, 422 residues long: MAM and fibronectin type III domain-containing protein 1 (422 aa).

The MAM domain maps to 1–75 (KFYYHMYGAT…VSLMEGICAG (75 aa)). Fibronectin type-III domains are found at residues 2-74 (FYYH…GICA), 196-286 (PGWN…QART), and 291-386 (PSRA…YIVT).

Component of the acid-insoluble and acid-soluble organic matrix of the aragonitic skeleton (at protein level).

Its subcellular location is the secreted. This Acropora millepora (Staghorn coral) protein is MAM and fibronectin type III domain-containing protein 1.